Consider the following 214-residue polypeptide: MFITLEGIEGAGKTTQLPRLVDFLEQHGHTCVVTREPGGTGMGQKIRSLLLDPDNSDMSPETELFLYAADRAQHVRRLIEPALAEGKTVVCDRFADATEVYQGWARGLDMELVQVLNRVATGGRKPDITLLFDLPPEAGLKRAWQRIARNGKEAADCRFENEKMAFHERVRHGYLDLARREPERFVVIDALGPAAEVAGRMIAALERVPDINRP.

Gly7 to Thr14 lines the ATP pocket.

This sequence belongs to the thymidylate kinase family.

The catalysed reaction is dTMP + ATP = dTDP + ADP. Its function is as follows. Phosphorylation of dTMP to form dTDP in both de novo and salvage pathways of dTTP synthesis. This Desulfosudis oleivorans (strain DSM 6200 / JCM 39069 / Hxd3) (Desulfococcus oleovorans) protein is Thymidylate kinase.